A 438-amino-acid polypeptide reads, in one-letter code: MSKKQLVKTDGHNQLDQPNTKALQLKKKQFNSGVRVTSEISFLREVIAHHPGIETERVIDNQTFGSAMYLERAQKEHQLFIKILRQHGTKVHYLQDLLLEALSAADPNVRQDFIKNFLLESGIKSVSTFEACLNFFRSLDSLVDVIKVMFGGIKVSDVPPITPQRFADIHVSNSPFLIKPLSFSLYPHKFFNTLGTGVALFVTNDSELKRHSLVYEYIMRFHPRFDGVKLYTNRDFKNCLINSSDIIQISNEILLIGISHDTDVLGIESLARNLLSDHTNPIKQIIAINIHKFGAKTNLNKLIAMVDVDKFIIARKVLQATEIFELTATAQRDVDGLAQIKFKPLKFNFGEIIEAIIDKQPRFVIIGGGDEVAERKELLDCGMGVLNLSPGEIVVFDRNHYTNNLLNELGLIIHKIPASELSRGPSGPLEMVCSLWRE.

Belongs to the arginine deiminase family.

The protein is Arginine deiminase-like protein of Mycoplasma pneumoniae (strain ATCC 29342 / M129 / Subtype 1) (Mycoplasmoides pneumoniae).